The sequence spans 442 residues: Serine--tRNA ligase (442 aa).

249–251 (TSE) provides a ligand contact to L-serine. Residue 280-282 (RSE) coordinates ATP. Glu303 serves as a coordination point for L-serine. 367–370 (EISS) lines the ATP pocket. Ser402 is an L-serine binding site.

Belongs to the class-II aminoacyl-tRNA synthetase family. Type-1 seryl-tRNA synthetase subfamily. Homodimer. The tRNA molecule binds across the dimer.

Its subcellular location is the cytoplasm. It catalyses the reaction tRNA(Ser) + L-serine + ATP = L-seryl-tRNA(Ser) + AMP + diphosphate + H(+). The enzyme catalyses tRNA(Sec) + L-serine + ATP = L-seryl-tRNA(Sec) + AMP + diphosphate + H(+). The protein operates within aminoacyl-tRNA biosynthesis; selenocysteinyl-tRNA(Sec) biosynthesis; L-seryl-tRNA(Sec) from L-serine and tRNA(Sec): step 1/1. In terms of biological role, catalyzes the attachment of serine to tRNA(Ser). Is also able to aminoacylate tRNA(Sec) with serine, to form the misacylated tRNA L-seryl-tRNA(Sec), which will be further converted into selenocysteinyl-tRNA(Sec). The chain is Serine--tRNA ligase from Acidovorax sp. (strain JS42).